The sequence spans 575 residues: Probable ferredoxin/ferredoxin--NADP reductase (575 aa).

2 4Fe-4S ferredoxin-type domains span residues 2 to 29 (PHVI…PTPD) and 37 to 66 (EMLY…PNTR). Positions 9, 15, 19, 46, 49, 52, and 56 each coordinate [4Fe-4S] cluster. Positions 115–575 (VAVVGSGPAA…GQPIVLTVPL (461 aa)) are ferredoxin--NADP reductase. The FAD site is built by alanine 123, glutamate 143, leucine 151, and isoleucine 187. NADP(+) is bound by residues arginine 213, 258–261 (NGNV), 302–303 (RR), and glutamate 314. Residues tryptophan 456 and 463-465 (GFI) contribute to the FAD site. Glycine 463 provides a ligand contact to NADP(+).

It in the C-terminal section; belongs to the ferredoxin--NADP reductase family. The cofactor is [4Fe-4S] cluster. FAD is required as a cofactor.

The catalysed reaction is 2 reduced [2Fe-2S]-[ferredoxin] + NADP(+) + H(+) = 2 oxidized [2Fe-2S]-[ferredoxin] + NADPH. The sequence is that of Probable ferredoxin/ferredoxin--NADP reductase (fprB) from Mycobacterium bovis (strain ATCC BAA-935 / AF2122/97).